Here is a 46-residue protein sequence, read N- to C-terminus: Esculentin-1R (46 aa).

C40 and C46 are oxidised to a cystine.

Expressed by the skin glands.

The protein resides in the secreted. Shows antibacterial activity against representative Gram-negative and Gram-positive bacterial species, and hemolytic activity. This Pelophylax ridibundus (Marsh frog) protein is Esculentin-1R.